A 103-amino-acid polypeptide reads, in one-letter code: Large ribosomal subunit protein uL24 (103 aa).

The protein belongs to the universal ribosomal protein uL24 family. As to quaternary structure, part of the 50S ribosomal subunit.

One of two assembly initiator proteins, it binds directly to the 5'-end of the 23S rRNA, where it nucleates assembly of the 50S subunit. Its function is as follows. One of the proteins that surrounds the polypeptide exit tunnel on the outside of the subunit. The sequence is that of Large ribosomal subunit protein uL24 from Vesicomyosocius okutanii subsp. Calyptogena okutanii (strain HA).